The sequence spans 274 residues: Energy-coupling factor transporter ATP-binding protein EcfA1 (274 aa).

Residues 10-241 form the ABC transporter domain; that stretch reads ASFQGVYFSY…AAELQKIRLD (232 aa). 42 to 49 lines the ATP pocket; the sequence is GHNGSGKS.

The protein belongs to the ABC transporter superfamily. Energy-coupling factor EcfA family. As to quaternary structure, forms a stable energy-coupling factor (ECF) transporter complex composed of 2 membrane-embedded substrate-binding proteins (S component), 2 ATP-binding proteins (A component) and 2 transmembrane proteins (T component).

It localises to the cell membrane. In terms of biological role, ATP-binding (A) component of a common energy-coupling factor (ECF) ABC-transporter complex. Unlike classic ABC transporters this ECF transporter provides the energy necessary to transport a number of different substrates. In Mycoplasma pneumoniae (strain ATCC 29342 / M129 / Subtype 1) (Mycoplasmoides pneumoniae), this protein is Energy-coupling factor transporter ATP-binding protein EcfA1.